A 135-amino-acid chain; its full sequence is C-type lectin BPL (135 aa).

4 disulfide bridges follow: Cys3–Cys14, Cys31–Cys131, Cys38–Cys133, and Cys106–Cys123. A C-type lectin domain is found at 10 to 132 (MNGLCYKIFN…CESKNAFLCQ (123 aa)). Residues Gln96, Asp98, Glu104, and Asp120 each coordinate Ca(2+). The Galactose-binding signature appears at 96–98 (QPD).

This sequence belongs to the true venom lectin family. Homodimer; disulfide-linked. As to expression, expressed by the venom gland.

It is found in the secreted. Functionally, galactose-binding protein which recognizes specific carbohydrate structures and agglutinates a variety of animal cells by binding to cell-surface glycoproteins and glycolipids. Calcium-dependent lectin. Shows high hemagglutinating activity in the presence of human erythrocytes, which are agglutinated with a minimum hemagglutination concentration (MHC) of 2.5-0.35 ug/ml. Causes indirect nephrotoxicity. Causes reductions in perfusion pressures, renal vascular resistance, urinary flow, glomerular filtration rate, sodium, potassium and chloride tubular transport. Its effects may be caused by the release of inflammatory mediators. This chain is C-type lectin BPL, found in Bothrops pirajai (Piraja's lancehead).